We begin with the raw amino-acid sequence, 424 residues long: Tyrosine--tRNA ligase (424 aa).

Residue tyrosine 37 participates in L-tyrosine binding. The 'HIGH' region motif lies at 42–51 (PTADSLHLGH). Residues tyrosine 175 and glutamine 179 each contribute to the L-tyrosine site. The 'KMSKS' region motif lies at 235-239 (KFGKT). Position 238 (lysine 238) interacts with ATP. One can recognise an S4 RNA-binding domain in the interval 357-414 (ADLMQALVDAELQPSRGQARKTIASNAVTINGEKQSDPEYIFNDEDRLFGRYTLLRRG).

Belongs to the class-I aminoacyl-tRNA synthetase family. TyrS type 1 subfamily. Homodimer.

It localises to the cytoplasm. It catalyses the reaction tRNA(Tyr) + L-tyrosine + ATP = L-tyrosyl-tRNA(Tyr) + AMP + diphosphate + H(+). Its function is as follows. Catalyzes the attachment of tyrosine to tRNA(Tyr) in a two-step reaction: tyrosine is first activated by ATP to form Tyr-AMP and then transferred to the acceptor end of tRNA(Tyr). In Salmonella enteritidis PT4 (strain P125109), this protein is Tyrosine--tRNA ligase.